A 145-amino-acid chain; its full sequence is UPF0179 protein Msm_0285 (145 aa).

It belongs to the UPF0179 family.

The protein is UPF0179 protein Msm_0285 of Methanobrevibacter smithii (strain ATCC 35061 / DSM 861 / OCM 144 / PS).